The following is a 524-amino-acid chain: MAAVAVAVREESRSEMKTELSPRPGAAGRELTQEEKLQLRKEKKQQKKKRKEEKGADQEIGSAVSAAQRQDPIRELPGPGSQLGGTAGEKLPAGRSKAELRAERRAKQEAERALKQARKGEQGGVPPQACPSTAGETTSGVKRVPEHTPADDPTLLRRLLRKPDRQQVPTRKDYGSKVSLFSHLPQYSRQSSLTQYMSIPSSVIHPAMVRLGLQYSQGLISGSNARCIALLHALQQVIQDYTTPPSEELSRDLVNKLKPYISFLTQCRPMSASMCNAIKFLTKEVTGMSSSKREEEAKSELREALDRYVQEKIVLAAQAISRFASTKISDGDVILVYGCSSLVSRILQEARVEGRRFRVVVVDSRPRLEGRHMLHSLVRAGVPTSYLLIPAASYVLPEVSKVLLGAHALLANGSVMSRVGTAQLALVARAHNVPVLVCCETYKFCERVQTDAFVSNELDDPDDLQCKRGDQVALANWQSHPSLRLLNLVYDVTPPELVDLVITELGMIPCSSVPVVLRVKSSDQ.

A disordered region spans residues 1 to 155; it reads MAAVAVAVRE…EHTPADDPTL (155 aa). Residue Ala2 is modified to N-acetylalanine. Basic and acidic residues-rich tracts occupy residues 8–20 and 31–40; these read VREE…KTEL and LTQEEKLQLR. The residue at position 12 (Ser12) is a Phosphoserine. A compositionally biased stretch (basic residues) spans 41–51; the sequence is KEKKQQKKKRK. The residue at position 86 (Thr86) is a Phosphothreonine. Positions 96 to 121 are enriched in basic and acidic residues; that stretch reads SKAELRAERRAKQEAERALKQARKGE. The span at 130 to 140 shows a compositional bias: polar residues; that stretch reads CPSTAGETTSG. Residues 171–180 are may bind the chemical integrated stress response (ISR) inhibitor ISRIB; sequence RKDYGSKVSL.

This sequence belongs to the eIF-2B alpha/beta/delta subunits family. Component of the translation initiation factor 2B (eIF2B) complex which is a heterodecamer of two sets of five different subunits: alpha, beta, gamma, delta and epsilon. Subunits alpha, beta and delta comprise a regulatory subcomplex and subunits epsilon and gamma comprise a catalytic subcomplex. Within the complex, the hexameric regulatory complex resides at the center, with the two heterodimeric catalytic subcomplexes bound on opposite sides.

It localises to the cytoplasm. Its subcellular location is the cytosol. Activated by the chemical integrated stress response (ISR) inhibitor ISRIB which stimulates guanine nucleotide exchange factor activity for both phosphorylated and unphosphorylated eIF2. Its function is as follows. Acts as a component of the translation initiation factor 2B (eIF2B) complex, which catalyzes the exchange of GDP for GTP on eukaryotic initiation factor 2 (eIF2) gamma subunit. Its guanine nucleotide exchange factor activity is repressed when bound to eIF2 complex phosphorylated on the alpha subunit, thereby limiting the amount of methionyl-initiator methionine tRNA available to the ribosome and consequently global translation is repressed. The sequence is that of Translation initiation factor eIF2B subunit delta (Eif2b4) from Mus musculus (Mouse).